A 188-amino-acid chain; its full sequence is Small ribosomal subunit protein uS7 (188 aa).

Belongs to the universal ribosomal protein uS7 family. As to quaternary structure, part of the 30S ribosomal subunit.

One of the primary rRNA binding proteins, it binds directly to 16S rRNA where it nucleates assembly of the head domain of the 30S subunit. Is located at the subunit interface close to the decoding center. The chain is Small ribosomal subunit protein uS7 from Methanococcus maripaludis (strain DSM 14266 / JCM 13030 / NBRC 101832 / S2 / LL).